Consider the following 341-residue polypeptide: Transcription factor VIP1 (341 aa).

Disordered regions lie at residues 1–33 (MEGG…HRRA), 59–106 (SLDF…PEAR), and 135–156 (SSGE…DGEM). Residues 1 to 162 (MEGGGRGPNQ…DGEMSSASFN (162 aa)) are necessary and sufficient for transient T-DNA transformation end expression. Over residues 15–24 (EIEHMPEAPR) the composition is skewed to basic and acidic residues. Positions 71–80 (QSQQQPQASP) are enriched in low complexity. The residue at position 79 (Ser-79) is a Phosphoserine. The involved in homomultimerization and histone H2A binding stretch occupies residues 163–341 (IESILASVSG…PSYMDFTKRG (179 aa)). The bZIP domain maps to 194–257 (DPKRAKRILA…SELNTENKHL (64 aa)). The basic motif stretch occupies residues 196–217 (KRAKRILANRQSAARSKERKIR). Residues 198–205 (AKRILANR) carry the Nuclear localization signal motif. Residues 222–257 (LERKVQTLQNEATTLSAQVTMLQRGTSELNTENKHL) form a leucine-zipper region. A compositionally biased stretch (polar residues) spans 307–331 (SQQSAMNQFGNKTNQQMSTNGQPSL). The segment at 307–341 (SQQSAMNQFGNKTNQQMSTNGQPSLPSYMDFTKRG) is disordered.

The protein belongs to the bZIP family. Forms homomultimers. Interacts with Agrobacterium tumefaciens VirE2 and mediates its translocation to the host nucleus. Binds to VIP2. Forms a complex made of Agrobacterium VirE2, VIP1, VIP2 and single-stranded DNA (ssDNA). The interaction with KAP1 mediates its nuclear import. Binds to the H2A histone RAT5. Interacts with MPK3 and Agrobacterium virF. Forms a complex made of VIP1, VBF and Agrobacterium virE2. Interacts with SCF(VBF) E3 ubiquitin ligase complex. Binds directly to VBF. Forms heterodimers with BZIP34 and BZIP61. Post-translationally, phosphorylated by MPK3. This phosphorylation promotes nuclear localization. As to expression, mostly expressed in dividing cells, present in leaves, roots and seedlings.

It is found in the cytoplasm. The protein resides in the nucleus. Transcription activator that binds specifically to the VIP1 response elements (VREs) DNA sequence 5'-ACNGCT-3' found in some stress genes (e.g. TRX8 and MYB44), when phosphorylated/activated by MPK3. Required for Agrobacterium VirE2 nuclear import and tumorigenicity. Promotes transient expression of T-DNA in early stages by interacting with VirE2 in complex with the T-DNA and facilitating its translocation to the nucleus, and mediates stable genetic transformation by Agrobacterium by binding H2A histone. Prevents cell differentiation and shoot formation. Limits sulfate utilization efficiency (SUE) and sulfate uptake, especially in low-sulfur conditions. Plays a role in osmosensory response by binding to the 5'-AGCTGT/G-3' DNA sequence found in the promoters of the hypoosmolarity-responsive genes CYP707A1 and CYP707A3. Involved in the negative regulation of touch-induced root bending and salt-dependent root bending. The protein is Transcription factor VIP1 of Arabidopsis thaliana (Mouse-ear cress).